A 412-amino-acid chain; its full sequence is L-threonine:uridine-5'-aldehyde transaldolase (412 aa).

Position 229 is an N6-(pyridoxal phosphate)lysine (Lys-229).

The protein belongs to the SHMT family. Pyridoxal 5'-phosphate serves as cofactor.

It carries out the reaction uridine-5'-aldehyde + L-threonine = (5'S,6'S)-C-glycyluridine + acetaldehyde. The protein operates within antibiotic biosynthesis. Its function is as follows. Transaldolase involved in the biosynthesis of the capuramycin-type nucleoside antibiotic A-503083. Catalyzes the condensation of L-threonine and uridine-5'-aldehyde to form 5'-C-glycyluridine (GlyU). Forms (5'S,6'S)-GlyU. The sequence is that of L-threonine:uridine-5'-aldehyde transaldolase from Streptomyces sp.